Here is a 1096-residue protein sequence, read N- to C-terminus: Cation-transporting ATPase 5 (1096 aa).

Over 1-19 the chain is Cytoplasmic; sequence MDSIELKQLVPENDSEPGT. Residues 20 to 41 traverse the membrane as a helical segment; sequence PRQLLFQHYDISNEETIGIKPF. Residues 42-47 are Lumenal-facing; that stretch reads KSIPAK. A helical transmembrane segment spans residues 48–70; sequence VYILRVTEILTLGLLHLILTWLP. Over 71 to 193 the chain is Cytoplasmic; the sequence is EFRLKWIEAP…LVSTKKSIVT (123 aa). A helical transmembrane segment spans residues 194–216; it reads ILLNEVLHPFYLFQAVSVLIWLC. The Lumenal portion of the chain corresponds to 217-220; that stretch reads DSFV. A helical membrane pass occupies residues 221-238; sequence FYSCCIVFISSYSIFLSV. Over 239 to 391 the chain is Cytoplasmic; the sequence is KESKESENRI…NLRPSQLYLD (153 aa). A helical transmembrane segment spans residues 392-412; the sequence is SMSFLKTMAILSFVSIVFIAI. Residues 413-425 are Lumenal-facing; the sequence is YLNLYNASFGHVV. A helical membrane pass occupies residues 426–447; it reads LRSLDVLTILVPPALPATLSVG. The Cytoplasmic segment spans residues 448–895; the sequence is IANSIARLSR…SLILSHRCFQ (448 aa). The active-site 4-aspartylphosphate intermediate is Asp-480. Mg(2+) contacts are provided by Asp-838 and Asp-842. A helical transmembrane segment spans residues 896 to 915; the sequence is YMVLCAIVQFSGVFFLYLKN. Residues 916-922 lie on the Lumenal side of the membrane; sequence YNFNDNQ. The chain crosses the membrane as a helical span at residues 923 to 940; it reads FLFMDLLIIFPLSAAMSY. Over 941-958 the chain is Cytoplasmic; that stretch reads FDPAQNLTSNRPNSTLFG. A helical membrane pass occupies residues 959–982; it reads KGRVKDLGIQSVLIWLSHGLLTLI. Over 983–1003 the chain is Lumenal; the sequence is LHELNWVELPEWQLEKSNTKN. A helical transmembrane segment spans residues 1004 to 1026; that stretch reads VLVTSIFLLSSLQYLGICIGINQ. Topologically, residues 1027 to 1040 are cytoplasmic; sequence SSEFLSPIWKKKTY. Residues 1041–1060 traverse the membrane as a helical segment; the sequence is VCLCTTIGLCNIYLCFANEN. At 1061-1075 the chain is on the lumenal side; that stretch reads HIISRCLQITRLPTL. A helical membrane pass occupies residues 1076–1096; sequence YRFIILFMGVISCCLTSILNM.

This sequence belongs to the cation transport ATPase (P-type) (TC 3.A.3) family. Type V subfamily.

The protein resides in the endoplasmic reticulum membrane. Its subcellular location is the golgi apparatus membrane. It catalyses the reaction ATP + H2O = ADP + phosphate + H(+). Plays a role in regulating calcium and manganese homeostasis responsible for cell cycle progression. This is Cation-transporting ATPase 5 (cta5) from Schizosaccharomyces pombe (strain 972 / ATCC 24843) (Fission yeast).